The primary structure comprises 466 residues: Acetylornithine aminotransferase, mitochondrial (466 aa).

Position 308 is an N6-(pyridoxal phosphate)lysine (Lys308).

This sequence belongs to the class-III pyridoxal-phosphate-dependent aminotransferase family. The cofactor is pyridoxal 5'-phosphate.

It localises to the mitochondrion matrix. The catalysed reaction is N(2)-acetyl-L-ornithine + 2-oxoglutarate = N-acetyl-L-glutamate 5-semialdehyde + L-glutamate. It functions in the pathway amino-acid biosynthesis; L-arginine biosynthesis; N(2)-acetyl-L-ornithine from L-glutamate: step 4/4. The protein is Acetylornithine aminotransferase, mitochondrial (ARG8) of Debaryomyces hansenii (strain ATCC 36239 / CBS 767 / BCRC 21394 / JCM 1990 / NBRC 0083 / IGC 2968) (Yeast).